The following is a 388-amino-acid chain: Putative N(4)-(beta-N-acetylglucosaminyl)-L-asparaginase GL17147 (388 aa).

Positions 1 to 20 are cleaved as a signal peptide; the sequence is MYKAQYLWLFGLVLISRSAT. Intrachain disulfides connect cysteine 94/cysteine 99 and cysteine 193/cysteine 209. Catalysis depends on threonine 240, which acts as the Nucleophile. Residues 268 to 271 and 291 to 294 contribute to the substrate site; these read RVGD and TGDG. Residues cysteine 351 and cysteine 378 are joined by a disulfide bond.

The protein belongs to the Ntn-hydrolase family. Heterotetramer of two alpha and two beta chains arranged as a dimer of alpha/beta heterodimers. Cleaved into an alpha and beta chain by autocatalysis; this activates the enzyme. The N-terminal residue of the beta subunit is responsible for the nucleophile hydrolase activity.

The enzyme catalyses N(4)-(beta-N-acetyl-D-glucosaminyl)-L-asparagine + H2O = N-acetyl-beta-D-glucosaminylamine + L-aspartate + H(+). Its function is as follows. Cleaves the GlcNAc-Asn bond which joins oligosaccharides to the peptide of asparagine-linked glycoproteins. The chain is Putative N(4)-(beta-N-acetylglucosaminyl)-L-asparaginase GL17147 from Drosophila persimilis (Fruit fly).